Reading from the N-terminus, the 914-residue chain is DNA mismatch repair protein MutS (914 aa).

The segment at 1–25 (MDKKNDHKNNLIPQPASSFASSQER) is disordered. Polar residues predominate over residues 11–25 (LIPQPASSFASSQER). An ATP-binding site is contributed by 662–669 (GPNMGGKS).

Belongs to the DNA mismatch repair MutS family.

This protein is involved in the repair of mismatches in DNA. It is possible that it carries out the mismatch recognition step. This protein has a weak ATPase activity. The polypeptide is DNA mismatch repair protein MutS (Bartonella tribocorum (strain CIP 105476 / IBS 506)).